Here is a 490-residue protein sequence, read N- to C-terminus: GTPase Der (490 aa).

2 consecutive EngA-type G domains span residues 3–166 (PVVA…MEDL) and 203–376 (IKLA…DSST). GTP-binding positions include 9-16 (GRPNVGKS), 56-60 (DTGGI), 118-121 (NKTD), 209-216 (GRPNVGKS), 256-260 (DTAGV), and 321-324 (NKWD). The region spanning 377 to 461 (RRVGTSMLTR…PIRIQFKEGE (85 aa)) is the KH-like domain.

The protein belongs to the TRAFAC class TrmE-Era-EngA-EngB-Septin-like GTPase superfamily. EngA (Der) GTPase family. In terms of assembly, associates with the 50S ribosomal subunit.

Functionally, GTPase that plays an essential role in the late steps of ribosome biogenesis. This Escherichia coli O17:K52:H18 (strain UMN026 / ExPEC) protein is GTPase Der.